Consider the following 119-residue polypeptide: ATP-dependent Clp protease adapter protein ClpS (119 aa).

The disordered stretch occupies residues 1 to 29 (MICPPGENKSMAERKQGGQGNGVGSSVVT).

Belongs to the ClpS family. Binds to the N-terminal domain of the chaperone ClpA.

In terms of biological role, involved in the modulation of the specificity of the ClpAP-mediated ATP-dependent protein degradation. The protein is ATP-dependent Clp protease adapter protein ClpS of Caulobacter vibrioides (strain ATCC 19089 / CIP 103742 / CB 15) (Caulobacter crescentus).